The primary structure comprises 130 residues: S-adenosylmethionine decarboxylase proenzyme (130 aa).

Residue serine 66 is the Schiff-base intermediate with substrate; via pyruvic acid of the active site. Pyruvic acid (Ser); by autocatalysis is present on serine 66. The active-site Proton acceptor; for processing activity is the histidine 71. Cysteine 86 (proton donor; for catalytic activity) is an active-site residue.

It belongs to the prokaryotic AdoMetDC family. Type 1 subfamily. Heterotetramer of two alpha and two beta chains arranged as a dimer of alpha/beta heterodimers. Requires pyruvate as cofactor. Post-translationally, is synthesized initially as an inactive proenzyme. Formation of the active enzyme involves a self-maturation process in which the active site pyruvoyl group is generated from an internal serine residue via an autocatalytic post-translational modification. Two non-identical subunits are generated from the proenzyme in this reaction, and the pyruvate is formed at the N-terminus of the alpha chain, which is derived from the carboxyl end of the proenzyme. The post-translation cleavage follows an unusual pathway, termed non-hydrolytic serinolysis, in which the side chain hydroxyl group of the serine supplies its oxygen atom to form the C-terminus of the beta chain, while the remainder of the serine residue undergoes an oxidative deamination to produce ammonia and the pyruvoyl group blocking the N-terminus of the alpha chain.

It carries out the reaction S-adenosyl-L-methionine + H(+) = S-adenosyl 3-(methylsulfanyl)propylamine + CO2. Its pathway is amine and polyamine biosynthesis; S-adenosylmethioninamine biosynthesis; S-adenosylmethioninamine from S-adenosyl-L-methionine: step 1/1. Catalyzes the decarboxylation of S-adenosylmethionine to S-adenosylmethioninamine (dcAdoMet), the propylamine donor required for the synthesis of the polyamines spermine and spermidine from the diamine putrescine. This chain is S-adenosylmethionine decarboxylase proenzyme, found in Bacillus cereus (strain ATCC 10987 / NRS 248).